A 707-amino-acid chain; its full sequence is Heat shock protein hsp88 (707 aa).

Positions 662–692 (EAEKAAKKAEEEARKAKEAAEKAAQEGAKDD) are enriched in basic and acidic residues. The tract at residues 662–707 (EAEKAAKKAEEEARKAKEAAEKAAQEGAKDDEMTDADAPKPVVEEA) is disordered.

It belongs to the heat shock protein 70 family. As to quaternary structure, binds hsp30 independent of temperature or substrate. The N-terminus is blocked.

It localises to the cytoplasm. The polypeptide is Heat shock protein hsp88 (hsp88) (Neurospora crassa (strain ATCC 24698 / 74-OR23-1A / CBS 708.71 / DSM 1257 / FGSC 987)).